A 213-amino-acid polypeptide reads, in one-letter code: LIM domain-containing protein PLIM2c (213 aa).

2 LIM zinc-binding domains span residues 9-69 (DKCK…LFKE) and 105-165 (DKCA…LFLE). Residues 177-213 (ANHRRSTAEEDKTEPKEDEANPTEEETSDAAAEEHES) are disordered. Residues 182–195 (STAEEDKTEPKEDE) are compositionally biased toward basic and acidic residues.

As to quaternary structure, interacts with F-actin. As to expression, exclusively expressed in pollen grains.

Its subcellular location is the cytoplasm. The protein localises to the cytoskeleton. Binds to actin filaments and promotes cross-linking into thick bundles. Has an actin-stabilizing activity. Associates predominantly with long and dynamic actin bundles in the shank of growing pollen tubes. The actin regulatory activities are inhibited by pH &gt; 6.8 and/or high [Ca(2+)]. The sequence is that of LIM domain-containing protein PLIM2c from Arabidopsis thaliana (Mouse-ear cress).